A 261-amino-acid polypeptide reads, in one-letter code: Phosphatidylglycerol--prolipoprotein diacylglyceryl transferase (261 aa).

The next 4 helical transmembrane spans lie at 17 to 37, 60 to 80, 92 to 112, and 121 to 141; these read FGIHWYGLMYLIGFLAFLWLG, ALFYGALGVILGGRLGYALFY, ILFLWQGGMSFHGGFLGVMVA, and GLTFFGIMDFVAPLVPVGLGA. Residue Arg143 coordinates a 1,2-diacyl-sn-glycero-3-phospho-(1'-sn-glycerol). A run of 3 helical transmembrane segments spans residues 175-195, 203-223, and 237-257; these read PSQLYEFLLEGVALFILLWWY, GSVSALFLIGYGSFRFLVEFT, and LSMGQWLSLPMVIAGVWLLIV.

This sequence belongs to the Lgt family.

It localises to the cell inner membrane. The enzyme catalyses L-cysteinyl-[prolipoprotein] + a 1,2-diacyl-sn-glycero-3-phospho-(1'-sn-glycerol) = an S-1,2-diacyl-sn-glyceryl-L-cysteinyl-[prolipoprotein] + sn-glycerol 1-phosphate + H(+). The protein operates within protein modification; lipoprotein biosynthesis (diacylglyceryl transfer). Catalyzes the transfer of the diacylglyceryl group from phosphatidylglycerol to the sulfhydryl group of the N-terminal cysteine of a prolipoprotein, the first step in the formation of mature lipoproteins. The polypeptide is Phosphatidylglycerol--prolipoprotein diacylglyceryl transferase (Methylobacillus flagellatus (strain ATCC 51484 / DSM 6875 / VKM B-1610 / KT)).